The primary structure comprises 309 residues: Vacuolar membrane protein YOR292C (309 aa).

The Vacuolar segment spans residues 1–52 (MPLQLFGRDQIVVHYDNGNMSNDDQNHQSVLGSWTRRAAAALRTLMNKRIQR). Residue Asn19 is glycosylated (N-linked (GlcNAc...) asparagine). The chain crosses the membrane as a helical span at residues 53–73 (ITLTHWLLLVIWVTSLWKFTS). Over 74 to 81 (HYRQLYAN) the chain is Cytoplasmic. The chain crosses the membrane as a helical span at residues 82 to 102 (SAVFATLCTNILLFGISDILA). Residues 103–183 (QSIACFYSYH…KTDTFDFFRW (81 aa)) lie on the Vacuolar side of the membrane. The N-linked (GlcNAc...) asparagine glycan is linked to Asn121. Residues 184–204 (GCFMFWGFFISFFQAPWYKFL) form a helical membrane-spanning segment. Over 205-225 (NFFYTEDPTVVQVFERVLSDQ) the chain is Cytoplasmic. A helical transmembrane segment spans residues 226-246 (LLYSPISLYCFFMFSNYVMEG). The Vacuolar portion of the chain corresponds to 247 to 260 (GDKDTLGKKIQRLY). The chain crosses the membrane as a helical span at residues 261–281 (ISTLGCNYLVWPMVQFINFLI). The Cytoplasmic portion of the chain corresponds to 282–309 (MPRDFQAPFSSSVGVVWNCFLSMRNASK).

Belongs to the peroxisomal membrane protein PXMP2/4 family. Post-translationally, N-glycosylated.

It localises to the vacuole membrane. The polypeptide is Vacuolar membrane protein YOR292C (Saccharomyces cerevisiae (strain ATCC 204508 / S288c) (Baker's yeast)).